The following is a 1025-amino-acid chain: Kinesin-like protein KIN-14P (1025 aa).

Disordered stretches follow at residues 1–87 (MNPM…MHHG) and 263–286 (YSQIESQTKTEKSKWEEQKKNEEE). Over residues 15–28 (STPRSPFSPFSPLS) the composition is skewed to low complexity. Basic and acidic residues predominate over residues 29 to 41 (VDDRHRNHADTKT). Residues 42–53 (PRSPFSPFSPLS) are compositionally biased toward low complexity. The segment covering 65-75 (KFQQALASSGQ) has biased composition (polar residues). A coiled-coil region spans residues 203 to 425 (HEIATQQLRQ…REMEKKSESN (223 aa)). Residues 270–286 (TKTEKSKWEEQKKNEEE) are compositionally biased toward basic and acidic residues. A Kinesin motor domain is found at 509–838 (NIRVFCRVRP…LKFAERVSGV (330 aa)). ATP is bound at residue 593 to 600 (GQTGSGKT). Positions 847 to 879 (KEGKDVRDLMEQLASLKDTIARKDEEIERLQHQ) form a coiled coil. Disordered regions lie at residues 881 to 926 (QRLQ…SAEA), 939 to 977 (AASMGTQGSIDVTKRPPRISDRAKSVTAKSSTSVTRPLD), and 994 to 1025 (TGLTSSSKGLASSSIKKTGSTSSLAKSSKRWA). Polar residues-rich tracts occupy residues 901–913 (SDTGEYSSQSRYS) and 939–948 (AASMGTQGSI). A compositionally biased stretch (basic and acidic residues) spans 950-962 (VTKRPPRISDRAK). Composition is skewed to low complexity over residues 963–974 (SVTAKSSTSVTR) and 998–1016 (SSSKGLASSSIKKTGSTSS).

It belongs to the TRAFAC class myosin-kinesin ATPase superfamily. Kinesin family. KIN-14 subfamily.

The polypeptide is Kinesin-like protein KIN-14P (Arabidopsis thaliana (Mouse-ear cress)).